The primary structure comprises 433 residues: ATP-dependent protease ATPase subunit HslU (433 aa).

Residues I18, 60–65 (GVGKTE), D246, E311, and R383 contribute to the ATP site.

This sequence belongs to the ClpX chaperone family. HslU subfamily. In terms of assembly, a double ring-shaped homohexamer of HslV is capped on each side by a ring-shaped HslU homohexamer. The assembly of the HslU/HslV complex is dependent on binding of ATP.

Its subcellular location is the cytoplasm. ATPase subunit of a proteasome-like degradation complex; this subunit has chaperone activity. The binding of ATP and its subsequent hydrolysis by HslU are essential for unfolding of protein substrates subsequently hydrolyzed by HslV. HslU recognizes the N-terminal part of its protein substrates and unfolds these before they are guided to HslV for hydrolysis. The sequence is that of ATP-dependent protease ATPase subunit HslU from Cereibacter sphaeroides (strain ATCC 17029 / ATH 2.4.9) (Rhodobacter sphaeroides).